A 535-amino-acid polypeptide reads, in one-letter code: Peroxisomal membrane protein PEX29 (535 aa).

A run of 2 helical transmembrane segments spans residues 139 to 159 and 176 to 196; these read LSVP…SKPL and ILLL…PAYM. Residue N239 is glycosylated (N-linked (GlcNAc...) asparagine). The chain crosses the membrane as a helical span at residues 247–267; sequence MLLYVMSYDFVTSLIVKYLYF. N-linked (GlcNAc...) asparagine glycosylation occurs at N271. A run of 2 helical transmembrane segments spans residues 272 to 292 and 297 to 317; these read ITIF…LFGA and AMLP…TIAM. Residues N450 and N515 are each glycosylated (N-linked (GlcNAc...) asparagine). The segment at 511 to 535 is disordered; it reads AHRRNKSMESSNSLHPVKSIDSVDG.

The protein belongs to the PEX28-32 family. PEX29 subfamily.

It localises to the endoplasmic reticulum membrane. Its function is as follows. With PEX23, contributes to the formation of endoplasmic reticulum-mitochondria junctions which are important for mitochondrial function. Involved in lipid dropplets formation. The polypeptide is Peroxisomal membrane protein PEX29 (Ogataea parapolymorpha (strain ATCC 26012 / BCRC 20466 / JCM 22074 / NRRL Y-7560 / DL-1) (Yeast)).